The chain runs to 704 residues: Elongation factor G 1 (704 aa).

Positions 8-290 constitute a tr-type G domain; the sequence is ERYRNIGICA…CVVEYMPAPT (283 aa). Residues 17–24, 88–92, and 142–145 each bind GTP; these read AHVDAGKT, DTPGH, and NKMD.

This sequence belongs to the TRAFAC class translation factor GTPase superfamily. Classic translation factor GTPase family. EF-G/EF-2 subfamily.

It localises to the cytoplasm. In terms of biological role, catalyzes the GTP-dependent ribosomal translocation step during translation elongation. During this step, the ribosome changes from the pre-translocational (PRE) to the post-translocational (POST) state as the newly formed A-site-bound peptidyl-tRNA and P-site-bound deacylated tRNA move to the P and E sites, respectively. Catalyzes the coordinated movement of the two tRNA molecules, the mRNA and conformational changes in the ribosome. This is Elongation factor G 1 from Pseudoalteromonas translucida (strain TAC 125).